Consider the following 552-residue polypeptide: Hydroxylamine reductase (552 aa).

The [4Fe-4S] cluster site is built by cysteine 3, cysteine 6, cysteine 15, and cysteine 21. The hybrid [4Fe-2O-2S] cluster site is built by histidine 247, glutamate 271, cysteine 315, cysteine 407, cysteine 435, cysteine 460, glutamate 495, and lysine 497. Residue cysteine 407 is modified to Cysteine persulfide.

Belongs to the HCP family. It depends on [4Fe-4S] cluster as a cofactor. Hybrid [4Fe-2O-2S] cluster is required as a cofactor.

It is found in the cytoplasm. The catalysed reaction is A + NH4(+) + H2O = hydroxylamine + AH2 + H(+). Catalyzes the reduction of hydroxylamine to form NH(3) and H(2)O. This is Hydroxylamine reductase from Thermosipho melanesiensis (strain DSM 12029 / CIP 104789 / BI429).